Consider the following 193-residue polypeptide: NAD(P)H-quinone oxidoreductase subunit I (193 aa).

2 consecutive 4Fe-4S ferredoxin-type domains span residues 55-84 (GRIHFEFDKCISCEVCVRVCPINLPVVDWE) and 95-124 (KHYSIDFGVCIFCANCVEYCPTNCLSVTEE). The [4Fe-4S] cluster site is built by cysteine 64, cysteine 67, cysteine 70, cysteine 74, cysteine 104, cysteine 107, cysteine 110, and cysteine 114.

The protein belongs to the complex I 23 kDa subunit family. NDH-1 is composed of at least 11 different subunits. [4Fe-4S] cluster is required as a cofactor.

The protein resides in the cellular thylakoid membrane. It catalyses the reaction a plastoquinone + NADH + (n+1) H(+)(in) = a plastoquinol + NAD(+) + n H(+)(out). It carries out the reaction a plastoquinone + NADPH + (n+1) H(+)(in) = a plastoquinol + NADP(+) + n H(+)(out). In terms of biological role, NDH-1 shuttles electrons from an unknown electron donor, via FMN and iron-sulfur (Fe-S) centers, to quinones in the respiratory and/or the photosynthetic chain. The immediate electron acceptor for the enzyme in this species is believed to be plastoquinone. Couples the redox reaction to proton translocation, and thus conserves the redox energy in a proton gradient. This chain is NAD(P)H-quinone oxidoreductase subunit I, found in Cyanothece sp. (strain PCC 7425 / ATCC 29141).